A 210-amino-acid chain; its full sequence is Thymidylate kinase (210 aa).

Residue 10 to 17 participates in ATP binding; sequence GGEGAGKS.

The protein belongs to the thymidylate kinase family.

It catalyses the reaction dTMP + ATP = dTDP + ADP. Its function is as follows. Phosphorylation of dTMP to form dTDP in both de novo and salvage pathways of dTTP synthesis. This chain is Thymidylate kinase, found in Magnetococcus marinus (strain ATCC BAA-1437 / JCM 17883 / MC-1).